Here is a 407-residue protein sequence, read N- to C-terminus: UDP-N-acetyl-D-mannosamine dehydrogenase (407 aa).

The protein belongs to the UDP-glucose/GDP-mannose dehydrogenase family.

The catalysed reaction is UDP-N-acetyl-alpha-D-mannosamine + 2 NAD(+) + H2O = UDP-N-acetyl-alpha-D-mannosaminouronate + 2 NADH + 3 H(+). It participates in capsule biogenesis; capsule polysaccharide biosynthesis. Its function is as follows. Dehydrogenase involved in the biosynthesis of capsular polysaccharides. Catalyzes the NAD(+)-dependent oxidation of UDP-N-acetyl-D-mannosamine (UDP-ManNAc) to UDP-N-acetyl-D-mannosaminuronic acid (UDP-ManNAcA). This Campylobacter jejuni protein is UDP-N-acetyl-D-mannosamine dehydrogenase.